Here is a 76-residue protein sequence, read N- to C-terminus: Esculentin-2CG1 (76 aa).

The N-terminal stretch at 1-22 is a signal peptide; that stretch reads MFTMKKSMLLLFFLGTISLSLC. A propeptide spans 23–37 (removed in mature form); the sequence is EEERSADEDDGEEEV. Cys-70 and Cys-76 form a disulfide bridge.

Expressed by the skin glands.

Its subcellular location is the secreted. In terms of biological role, antimicrobial peptide active against a variety of Gram-positive and some Gram-negative bacterial strains. Has antifungal activity against a slime mold isolate. Has hemolytic activity against human erythrocytes. The chain is Esculentin-2CG1 from Amolops chunganensis (Chungan torrent frog).